Here is a 75-residue protein sequence, read N- to C-terminus: uncharacterized protein (75 aa).

This is an uncharacterized protein from Methanocaldococcus jannaschii (strain ATCC 43067 / DSM 2661 / JAL-1 / JCM 10045 / NBRC 100440) (Methanococcus jannaschii).